A 1473-amino-acid polypeptide reads, in one-letter code: Sulfite reductase [NADPH] subunit beta (1473 aa).

A Flavodoxin-like domain is found at 728–876 (LTILFASDGG…AYNLWEPELW (149 aa)). Residues C1328, C1334, C1373, and C1377 each coordinate [4Fe-4S] cluster. C1377 is a binding site for siroheme.

The protein belongs to the nitrite and sulfite reductase 4Fe-4S domain family. Alpha(2)-beta(2). The alpha component is a flavoprotein, the beta component is a hemoprotein. Siroheme is required as a cofactor. Requires [4Fe-4S] cluster as cofactor.

The protein localises to the cytoplasm. It catalyses the reaction hydrogen sulfide + 3 NADP(+) + 3 H2O = sulfite + 3 NADPH + 4 H(+). The protein operates within sulfur metabolism; hydrogen sulfide biosynthesis; hydrogen sulfide from sulfite (NADPH route): step 1/1. Catalyzes the reduction of sulfite to sulfide, one of several activities required for the biosynthesis of L-cysteine from sulfate. This chain is Sulfite reductase [NADPH] subunit beta (sir1), found in Schizosaccharomyces pombe (strain 972 / ATCC 24843) (Fission yeast).